Here is a 197-residue protein sequence, read N- to C-terminus: ATP-dependent Clp protease proteolytic subunit (197 aa).

The Nucleophile role is filled by serine 98. Histidine 123 is a catalytic residue.

This sequence belongs to the peptidase S14 family. As to quaternary structure, fourteen ClpP subunits assemble into 2 heptameric rings which stack back to back to give a disk-like structure with a central cavity, resembling the structure of eukaryotic proteasomes.

The protein resides in the cytoplasm. It catalyses the reaction Hydrolysis of proteins to small peptides in the presence of ATP and magnesium. alpha-casein is the usual test substrate. In the absence of ATP, only oligopeptides shorter than five residues are hydrolyzed (such as succinyl-Leu-Tyr-|-NHMec, and Leu-Tyr-Leu-|-Tyr-Trp, in which cleavage of the -Tyr-|-Leu- and -Tyr-|-Trp bonds also occurs).. Its function is as follows. Cleaves peptides in various proteins in a process that requires ATP hydrolysis. Has a chymotrypsin-like activity. Plays a major role in the degradation of misfolded proteins. The protein is ATP-dependent Clp protease proteolytic subunit of Limosilactobacillus reuteri (strain DSM 20016) (Lactobacillus reuteri).